The sequence spans 122 residues: MIQQQSLLNVADNSGARKLMCIRVVGGGNRRYAHIGDVIIAVVKDASPNMAVKKSDVVRAVVVRTKKGLRRDSGMSIRFDDNAAVIINQDGNPRGTRVFGPVARELRDKNFTKIVSLAPEVL.

Belongs to the universal ribosomal protein uL14 family. As to quaternary structure, part of the 50S ribosomal subunit. Forms a cluster with proteins L3 and L19. In the 70S ribosome, L14 and L19 interact and together make contacts with the 16S rRNA in bridges B5 and B8.

Binds to 23S rRNA. Forms part of two intersubunit bridges in the 70S ribosome. This chain is Large ribosomal subunit protein uL14, found in Trichodesmium erythraeum (strain IMS101).